Here is a 275-residue protein sequence, read N- to C-terminus: Transcription factor Ovo-like 2 (275 aa).

A disordered region spans residues 15–101; the sequence is SVRSWDELPD…GHLATKQRPV (87 aa). Composition is skewed to basic and acidic residues over residues 18-29 and 39-49; these read SWDELPDEKRAD and LLHDPPEDCRS. Residues 56–76 show a composition bias toward low complexity; it reads GSGSSSAGEPGGAESSSSPHA. The span at 80–89 shows a compositional bias: acidic residues; sequence ETPEPGDAEG. 4 consecutive C2H2-type zinc fingers follow at residues 119–141, 147–169, 175–198, and 214–237; these read HSCDLCGKGFRLQRMLNRHLKCH, HLCTFCGKGFNDTFDLKRHVRTH, YKCNVCNKAFTQRCSLESHLKKIH, and YVCEDCGYTGPTQEDLYLHVNSAH. At Ser-269 the chain carries Phosphoserine.

This sequence belongs to the krueppel C2H2-type zinc-finger protein family. In terms of assembly, interacts (via zinc-finger domains) with CEBPA (via bZIP domain); the interaction inhibits the transcription factor activity of CEBPA and is required to repress adipogenesis. Expressed in testis, ovary, heart and skeletal muscle. Expressed in the cornea, but absent from the corneal endothelium.

It is found in the nucleus. Functionally, zinc-finger transcription repressor factor. Plays a critical role in maintaining the identity of epithelial lineages by suppressing epithelial-to mesenchymal transition (EMT) mainly through the repression of ZEB1, an EMT inducer. Positively regulates neuronal differentiation. Suppresses cell cycling and terminal differentiation of keratinocytes by directly repressing MYC and NOTCH1. Important for the correct development of primordial germ cells in embryos. Plays dual functions in thermogenesis and adipogenesis to maintain energy balance. Essential for brown/beige adipose tissue-mediated thermogenesis, is necessary for the development of brown adipocytes. In white adipose tissues, limits adipogenesis by blocking CEBPA binding to its transcriptional targets and inhibiting its transcription factor activity. The protein is Transcription factor Ovo-like 2 of Homo sapiens (Human).